The primary structure comprises 160 residues: Cytochrome c-type biogenesis protein CcmE (160 aa).

The Cytoplasmic portion of the chain corresponds to 1-8; the sequence is MNPRRKKR. A helical; Signal-anchor for type II membrane protein membrane pass occupies residues 9 to 29; that stretch reads LGIILAIFFGISATVGLMVYA. Residues 30-160 lie on the Periplasmic side of the membrane; the sequence is LNQNMDLFYT…TTEQKEGNAQ (131 aa). Heme contacts are provided by histidine 128 and tyrosine 132.

It belongs to the CcmE/CycJ family.

It localises to the cell inner membrane. Its function is as follows. Heme chaperone required for the biogenesis of c-type cytochromes. Transiently binds heme delivered by CcmC and transfers the heme to apo-cytochromes in a process facilitated by CcmF and CcmH. This Vibrio atlanticus (strain LGP32) (Vibrio splendidus (strain Mel32)) protein is Cytochrome c-type biogenesis protein CcmE.